Reading from the N-terminus, the 380-residue chain is Cytochrome b (380 aa).

A run of 4 helical transmembrane segments spans residues 34–54 (FGSLLAVCLATQIITGLLLAM), 78–99 (WLIRNLHANGASFFFICIFLHI), 114–134 (WNTGVVLLLTLMATAFVGYVL), and 179–199 (FFALHFLLPFVIAGITIIHLT). 2 residues coordinate heme b: His84 and His98. 2 residues coordinate heme b: His183 and His197. His202 lines the a ubiquinone pocket. The next 4 membrane-spanning stretches (helical) occupy residues 227–247 (LKDILGLTLMFIPFLTLALFS), 289–309 (LGGVLALAASVLILLLIPFLH), 321–341 (LSQILFWLLVANLLILTWIGS), and 348–368 (FIIIGQMASFSYFSILLILFP).

This sequence belongs to the cytochrome b family. As to quaternary structure, the cytochrome bc1 complex contains 11 subunits: 3 respiratory subunits (MT-CYB, CYC1 and UQCRFS1), 2 core proteins (UQCRC1 and UQCRC2) and 6 low-molecular weight proteins (UQCRH/QCR6, UQCRB/QCR7, UQCRQ/QCR8, UQCR10/QCR9, UQCR11/QCR10 and a cleavage product of UQCRFS1). This cytochrome bc1 complex then forms a dimer. Heme b serves as cofactor.

The protein resides in the mitochondrion inner membrane. Component of the ubiquinol-cytochrome c reductase complex (complex III or cytochrome b-c1 complex) that is part of the mitochondrial respiratory chain. The b-c1 complex mediates electron transfer from ubiquinol to cytochrome c. Contributes to the generation of a proton gradient across the mitochondrial membrane that is then used for ATP synthesis. In Pavo muticus (Green peafowl), this protein is Cytochrome b (MT-CYB).